Consider the following 147-residue polypeptide: 3-dehydroquinate dehydratase (147 aa).

Catalysis depends on Tyr23, which acts as the Proton acceptor. Substrate contacts are provided by Asn75, His81, and Asp88. The Proton donor role is filled by His101. Residues 102–103 (LS) and Arg112 each bind substrate.

This sequence belongs to the type-II 3-dehydroquinase family. Homododecamer.

The enzyme catalyses 3-dehydroquinate = 3-dehydroshikimate + H2O. It functions in the pathway metabolic intermediate biosynthesis; chorismate biosynthesis; chorismate from D-erythrose 4-phosphate and phosphoenolpyruvate: step 3/7. Catalyzes a trans-dehydration via an enolate intermediate. The polypeptide is 3-dehydroquinate dehydratase (Nitrosococcus oceani (strain ATCC 19707 / BCRC 17464 / JCM 30415 / NCIMB 11848 / C-107)).